A 202-amino-acid polypeptide reads, in one-letter code: Na(+)-translocating NADH-quinone reductase subunit E (202 aa).

6 consecutive transmembrane segments (helical) span residues 4–24, 35–55, 81–101, 114–134, 144–164, and 180–200; these read LAGLFITAVFVENLALTFFLG, IEVAFGMGIAVIVVQTLTVPI, FLGLVSYLGVIAAIVQILEMF, GIYLPLIAVNCAILGGSLFMV, LVYGLGSGFGWALAIVALAGV, and LGITFISAGLMAMGFMAFSGI.

Belongs to the NqrDE/RnfAE family. In terms of assembly, composed of six subunits; NqrA, NqrB, NqrC, NqrD, NqrE and NqrF.

The protein localises to the cell inner membrane. It catalyses the reaction a ubiquinone + n Na(+)(in) + NADH + H(+) = a ubiquinol + n Na(+)(out) + NAD(+). Its function is as follows. NQR complex catalyzes the reduction of ubiquinone-1 to ubiquinol by two successive reactions, coupled with the transport of Na(+) ions from the cytoplasm to the periplasm. NqrA to NqrE are probably involved in the second step, the conversion of ubisemiquinone to ubiquinol. The protein is Na(+)-translocating NADH-quinone reductase subunit E of Nitrosomonas europaea (strain ATCC 19718 / CIP 103999 / KCTC 2705 / NBRC 14298).